The following is a 101-amino-acid chain: Ubiquitin-related modifier 1 (101 aa).

At Gly-101 the chain carries 1-thioglycine. A Glycyl lysine isopeptide (Gly-Lys) (interchain with K-? in acceptor proteins) cross-link involves residue Gly-101.

This sequence belongs to the URM1 family. In terms of assembly, component of a complex at least composed of URM1, CTU2/NCS2 and CTU1/ATPBD3. C-terminal thiocarboxylation occurs in 2 steps, it is first acyl-adenylated (-COAMP) via the hesA/moeB/thiF part of MOCS3, then thiocarboxylated (-COSH) via the rhodanese domain of MOCS3.

Its subcellular location is the cytoplasm. It participates in tRNA modification; 5-methoxycarbonylmethyl-2-thiouridine-tRNA biosynthesis. In terms of biological role, acts as a sulfur carrier required for 2-thiolation of mcm(5)S(2)U at tRNA wobble positions of cytosolic tRNA(Lys), tRNA(Glu) and tRNA(Gln). Serves as sulfur donor in tRNA 2-thiolation reaction by being thiocarboxylated (-COSH) at its C-terminus by MOCS3. The sulfur is then transferred to tRNA to form 2-thiolation of mcm(5)S(2)U. Also acts as a ubiquitin-like protein (UBL) that is covalently conjugated via an isopeptide bond to lysine residues of target proteins such as MOCS3, ATPBD3, CTU2, USP15 and CAS. The thiocarboxylated form serves as substrate for conjugation and oxidative stress specifically induces the formation of UBL-protein conjugates. The protein is Ubiquitin-related modifier 1 of Homo sapiens (Human).